Reading from the N-terminus, the 950-residue chain is Bifunctional glutamine synthetase adenylyltransferase/adenylyl-removing enzyme (950 aa).

Residues 1–443 (MSLPSPLLPV…VFVTLIGDEE (443 aa)) are adenylyl removase. Residues 450 to 950 (ERHFNELWDM…WQEWLESSTI (501 aa)) are adenylyl transferase.

This sequence belongs to the GlnE family. Mg(2+) serves as cofactor.

The catalysed reaction is [glutamine synthetase]-O(4)-(5'-adenylyl)-L-tyrosine + phosphate = [glutamine synthetase]-L-tyrosine + ADP. It carries out the reaction [glutamine synthetase]-L-tyrosine + ATP = [glutamine synthetase]-O(4)-(5'-adenylyl)-L-tyrosine + diphosphate. Functionally, involved in the regulation of glutamine synthetase GlnA, a key enzyme in the process to assimilate ammonia. When cellular nitrogen levels are high, the C-terminal adenylyl transferase (AT) inactivates GlnA by covalent transfer of an adenylyl group from ATP to specific tyrosine residue of GlnA, thus reducing its activity. Conversely, when nitrogen levels are low, the N-terminal adenylyl removase (AR) activates GlnA by removing the adenylyl group by phosphorolysis, increasing its activity. The regulatory region of GlnE binds the signal transduction protein PII (GlnB) which indicates the nitrogen status of the cell. The chain is Bifunctional glutamine synthetase adenylyltransferase/adenylyl-removing enzyme from Vibrio vulnificus (strain YJ016).